Reading from the N-terminus, the 138-residue chain is Large ribosomal subunit protein bL19 (138 aa).

This sequence belongs to the bacterial ribosomal protein bL19 family.

In terms of biological role, this protein is located at the 30S-50S ribosomal subunit interface and may play a role in the structure and function of the aminoacyl-tRNA binding site. The protein is Large ribosomal subunit protein bL19 of Rickettsia conorii (strain ATCC VR-613 / Malish 7).